Consider the following 831-residue polypeptide: Periplasmic nitrate reductase (831 aa).

The tat-type signal signal peptide spans 1 to 31; it reads MKLSRRDFMKANAAVAAAAAAGLTIPTVAKA. The 57-residue stretch at 40-96 folds into the 4Fe-4S Mo/W bis-MGD-type domain; that stretch reads IKWDKAPCRFCGTGCGVLVGTQNGRIVASQGDPDSPVNRGLNCVKGYFLPKIMYGKD. Residues Cys47, Cys50, Cys54, and Cys82 each contribute to the [4Fe-4S] cluster site. Residues Lys84, Gln151, Asn176, Cys180, 213 to 220, 244 to 248, 263 to 265, Met373, Gln377, Asn483, 509 to 510, Lys532, Asp559, and 719 to 728 each bind Mo-bis(molybdopterin guanine dinucleotide); these read WGSNMAEM, STFEH, QTD, SD, and TGRVLEHWHT. Phe795 contacts substrate. Residues Asn803 and Lys820 each contribute to the Mo-bis(molybdopterin guanine dinucleotide) site.

The protein belongs to the prokaryotic molybdopterin-containing oxidoreductase family. NasA/NapA/NarB subfamily. In terms of assembly, component of the periplasmic nitrate reductase NapAB complex composed of NapA and NapB. [4Fe-4S] cluster is required as a cofactor. The cofactor is Mo-bis(molybdopterin guanine dinucleotide). Post-translationally, predicted to be exported by the Tat system. The position of the signal peptide cleavage has not been experimentally proven.

The protein localises to the periplasm. It catalyses the reaction 2 Fe(II)-[cytochrome] + nitrate + 2 H(+) = 2 Fe(III)-[cytochrome] + nitrite + H2O. Its function is as follows. Catalytic subunit of the periplasmic nitrate reductase complex NapAB. Receives electrons from NapB and catalyzes the reduction of nitrate to nitrite. This is Periplasmic nitrate reductase from Yersinia enterocolitica serotype O:8 / biotype 1B (strain NCTC 13174 / 8081).